Here is a 163-residue protein sequence, read N- to C-terminus: Neurotrophin-3 (163 aa).

A signal peptide spans 1–3 (IQS). Residues 4 to 119 (TSMDQGILTE…VLNRTSRRKR (116 aa)) constitute a propeptide that is removed on maturation. The interval 35 to 61 (KQTARTKDGTQTTVKKSEAEADATASQ) is disordered. An N-linked (GlcNAc...) asparagine glycan is attached at asparagine 112.

This sequence belongs to the NGF-beta family.

The protein localises to the secreted. In terms of biological role, seems to promote the survival of visceral and proprioceptive sensory neurons. The chain is Neurotrophin-3 (NTF3) from Corallus caninus (Emerald tree boa).